Reading from the N-terminus, the 158-residue chain is QGVNIYNISAGTSVDLAAPVTTGDIVTFFSSALNLNAGAGNPNNTTLNLFAENGAYLLHIAFRLQENVIIFNSRQPDGPWLVEQRVSDVANQFAGIDGKAMVTVFDHGDKYQVVINEKTVIQYTKQISGLTLSLSYNATEETSIFSTVVEAVTYTGLA.

Gln1 bears the Blocked amino end (Gln) mark. The region spanning 12-155 (TSVDLAAPVT…STVVEAVTYT (144 aa)) is the Galectin domain. N-acetyl-alpha-neuraminyl-(2-&gt;3)-beta-D-galactosyl-(1-&gt;4)-beta-D-glucose contacts are provided by Asn43, His59, Arg63, Asn72, Arg74, Trp80, and Glu83.

Homodimer. Detected in the fruiting body.

In terms of biological role, anti-tumor lectin with DNase activity. Inhibits the growth of several tumor cell lines in vitro. Induces lymphocyte infiltration and necrosis of tumor cells in a mouse tumor model. Induces apoptosis in HeLa cells. Binds N-acetylneuraminyl lactose (N-acetyl-alpha-neuraminyl-(2-&gt;3)-beta-D-galactosyl-(1-&gt;4)-beta-D-glucose). This chain is Anti-tumor lectin, found in Cyclocybe aegerita (Black poplar mushroom).